The chain runs to 265 residues: Histone H1 (265 aa).

Residues 1–27 (MATEEPIVAVETVPEPIVTEPTTITEP) show a composition bias toward low complexity. 3 disordered regions span residues 1–66 (MATE…PTYE), 131–226 (AAKK…TTPG), and 242–265 (VKSVKAKSVKSPVKKVSVKRGGRK). A compositionally biased stretch (basic and acidic residues) spans 29-42 (VPEKEEPKAEVEKT). Positions 43–55 (KKAKGSKPKKASK) are enriched in basic residues. Residues 61-130 (SHPTYEEMIK…KVKGSFKLSA (70 aa)) enclose the H15 domain. The span at 140 to 171 (PKAKTAAKAKSVKAKPAAKPKAKAVVKPKVAS) shows a compositional bias: basic residues. The span at 186-202 (KPKTVAAKTKPTAAKPK) shows a compositional bias: low complexity. The span at 203-215 (AVVKPKSKVKPAK) shows a compositional bias: basic residues. Residues 216-226 (VAKTSVKTTPG) show a composition bias toward low complexity.

Belongs to the histone H1/H5 family.

It localises to the nucleus. Its subcellular location is the chromosome. Its function is as follows. Histones H1 are necessary for the condensation of nucleosome chains into higher-order structures. In Pisum sativum (Garden pea), this protein is Histone H1.